The chain runs to 256 residues: Imidazole glycerol phosphate synthase subunit HisF (256 aa).

Active-site residues include aspartate 11 and aspartate 130.

The protein belongs to the HisA/HisF family. In terms of assembly, heterodimer of HisH and HisF.

It is found in the cytoplasm. The catalysed reaction is 5-[(5-phospho-1-deoxy-D-ribulos-1-ylimino)methylamino]-1-(5-phospho-beta-D-ribosyl)imidazole-4-carboxamide + L-glutamine = D-erythro-1-(imidazol-4-yl)glycerol 3-phosphate + 5-amino-1-(5-phospho-beta-D-ribosyl)imidazole-4-carboxamide + L-glutamate + H(+). It functions in the pathway amino-acid biosynthesis; L-histidine biosynthesis; L-histidine from 5-phospho-alpha-D-ribose 1-diphosphate: step 5/9. IGPS catalyzes the conversion of PRFAR and glutamine to IGP, AICAR and glutamate. The HisF subunit catalyzes the cyclization activity that produces IGP and AICAR from PRFAR using the ammonia provided by the HisH subunit. In Synechococcus sp. (strain CC9605), this protein is Imidazole glycerol phosphate synthase subunit HisF.